A 715-amino-acid chain; its full sequence is Harpin secretion protein HrpI (715 aa).

7 helical membrane-spanning segments follow: residues Gly-23 to Ile-43, Val-45 to Pro-65, Ala-69 to Ile-89, Gly-115 to Ile-135, Ala-203 to Leu-223, Ile-241 to Ile-261, and Met-298 to Ile-318.

The protein belongs to the FHIPEP (flagella/HR/invasion proteins export pore) family.

Its subcellular location is the cell inner membrane. In terms of biological role, involved in the secretion of harpin; a proteinaceous elicitor of the hypersensitivity response in plants. The sequence is that of Harpin secretion protein HrpI (hrpI) from Erwinia amylovora (Fire blight bacteria).